Here is a 686-residue protein sequence, read N- to C-terminus: Polyribonucleotide nucleotidyltransferase (686 aa).

Positions 478 and 484 each coordinate Mg(2+). The 60-residue stretch at 545–604 folds into the KH domain; sequence PRVEVIQIPTDKIGLLIGPGGKTINALQDEYGVNISVENDGTVYVAGVEGMSVKAAVSAI. The S1 motif domain maps to 614-684; sequence GDIYVGKVVK…KQNRISLEMV (71 aa).

This sequence belongs to the polyribonucleotide nucleotidyltransferase family. Requires Mg(2+) as cofactor.

Its subcellular location is the cytoplasm. The enzyme catalyses RNA(n+1) + phosphate = RNA(n) + a ribonucleoside 5'-diphosphate. Its function is as follows. Involved in mRNA degradation. Catalyzes the phosphorolysis of single-stranded polyribonucleotides processively in the 3'- to 5'-direction. This chain is Polyribonucleotide nucleotidyltransferase, found in Rubrobacter xylanophilus (strain DSM 9941 / JCM 11954 / NBRC 16129 / PRD-1).